The primary structure comprises 96 residues: Co-chaperonin GroES (96 aa).

Belongs to the GroES chaperonin family. In terms of assembly, heptamer of 7 subunits arranged in a ring. Interacts with the chaperonin GroEL.

It localises to the cytoplasm. Its function is as follows. Together with the chaperonin GroEL, plays an essential role in assisting protein folding. The GroEL-GroES system forms a nano-cage that allows encapsulation of the non-native substrate proteins and provides a physical environment optimized to promote and accelerate protein folding. GroES binds to the apical surface of the GroEL ring, thereby capping the opening of the GroEL channel. The sequence is that of Co-chaperonin GroES from Haemophilus influenzae (strain 86-028NP).